Here is a 266-residue protein sequence, read N- to C-terminus: Glucosamine-6-phosphate deaminase (266 aa).

Aspartate 72 functions as the Proton acceptor; for enolization step in the catalytic mechanism. Aspartate 141 (for ring-opening step) is an active-site residue. The active-site Proton acceptor; for ring-opening step is histidine 143. Glutamate 148 functions as the For ring-opening step in the catalytic mechanism.

This sequence belongs to the glucosamine/galactosamine-6-phosphate isomerase family. NagB subfamily. In terms of assembly, homohexamer; trimer of disulfide-linked dimers.

The enzyme catalyses alpha-D-glucosamine 6-phosphate + H2O = beta-D-fructose 6-phosphate + NH4(+). The protein operates within amino-sugar metabolism; N-acetylneuraminate degradation; D-fructose 6-phosphate from N-acetylneuraminate: step 5/5. Its activity is regulated as follows. Allosterically activated by N-acetylglucosamine 6-phosphate (GlcNAc6P). Catalyzes the reversible isomerization-deamination of glucosamine 6-phosphate (GlcN6P) to form fructose 6-phosphate (Fru6P) and ammonium ion. The protein is Glucosamine-6-phosphate deaminase of Escherichia coli O6:H1 (strain CFT073 / ATCC 700928 / UPEC).